Reading from the N-terminus, the 447-residue chain is Argininosuccinate synthase (447 aa).

Residues 17 to 25 (AFSGGLDTS) and Ala43 each bind ATP. Residue Tyr99 coordinates L-citrulline. Residues Gly129 and Thr131 each contribute to the ATP site. L-aspartate-binding residues include Thr131, Asn135, and Asp136. Residue Asn135 coordinates L-citrulline. Asp136 is a binding site for ATP. Residues Arg139 and Ser192 each coordinate L-citrulline. Asp194 lines the ATP pocket. Thr201, Glu203, and Glu280 together coordinate L-citrulline.

Belongs to the argininosuccinate synthase family. Type 2 subfamily. Homotetramer.

It is found in the cytoplasm. The enzyme catalyses L-citrulline + L-aspartate + ATP = 2-(N(omega)-L-arginino)succinate + AMP + diphosphate + H(+). Its pathway is amino-acid biosynthesis; L-arginine biosynthesis; L-arginine from L-ornithine and carbamoyl phosphate: step 2/3. The chain is Argininosuccinate synthase from Klebsiella pneumoniae subsp. pneumoniae (strain ATCC 700721 / MGH 78578).